We begin with the raw amino-acid sequence, 417 residues long: Serine hydroxymethyltransferase (417 aa).

(6S)-5,6,7,8-tetrahydrofolate-binding positions include L121 and 125–127; that span reads GHL. K229 is modified (N6-(pyridoxal phosphate)lysine). Residue 355-357 coordinates (6S)-5,6,7,8-tetrahydrofolate; the sequence is SPF.

Belongs to the SHMT family. As to quaternary structure, homodimer. Pyridoxal 5'-phosphate is required as a cofactor.

Its subcellular location is the cytoplasm. The enzyme catalyses (6R)-5,10-methylene-5,6,7,8-tetrahydrofolate + glycine + H2O = (6S)-5,6,7,8-tetrahydrofolate + L-serine. Its pathway is one-carbon metabolism; tetrahydrofolate interconversion. It participates in amino-acid biosynthesis; glycine biosynthesis; glycine from L-serine: step 1/1. Functionally, catalyzes the reversible interconversion of serine and glycine with tetrahydrofolate (THF) serving as the one-carbon carrier. This reaction serves as the major source of one-carbon groups required for the biosynthesis of purines, thymidylate, methionine, and other important biomolecules. Also exhibits THF-independent aldolase activity toward beta-hydroxyamino acids, producing glycine and aldehydes, via a retro-aldol mechanism. In Xylella fastidiosa (strain M23), this protein is Serine hydroxymethyltransferase.